The sequence spans 305 residues: MDKIPVETLIKDLNLEVIVEAKNNKIDITTSDVNRPGLQFSGFYEHFAYERVQIIGKVETTFIEQLPDDVLAERADRFFNYPIPCLIVTRDLNIRQEIIDAAQKHDRYLLRTKEASTKFINRLINYLDEKLAPQITIHGDLVDVYGIGVLLLGESGIGKSETALELIKRGHRLVADDAVEISKISEDKLQGSSPEIIRHFIEIRGIGILDIKTLYGVGSVRNSMNIDLVIQLEEWDEDKYYDRLGLEDDYIKFLDVKVPKLTIPVRPGRNLAIIVEVAAMNHRQKQMGYNAAHELNKKLLKQIGN.

Catalysis depends on residues H138 and K159. Position 153–160 (153–160 (GESGIGKS)) interacts with ATP. A Mg(2+)-binding site is contributed by S160. The active-site Proton acceptor; for phosphorylation activity. Proton donor; for dephosphorylation activity is D177. An important for the catalytic mechanism of both phosphorylation and dephosphorylation region spans residues 201-210 (IEIRGIGILD). A Mg(2+)-binding site is contributed by E202. R243 is a catalytic residue. Positions 264–269 (PVRPGR) are important for the catalytic mechanism of dephosphorylation.

Belongs to the HPrK/P family. As to quaternary structure, homohexamer. It depends on Mg(2+) as a cofactor.

It catalyses the reaction [HPr protein]-L-serine + ATP = [HPr protein]-O-phospho-L-serine + ADP + H(+). The catalysed reaction is [HPr protein]-O-phospho-L-serine + phosphate + H(+) = [HPr protein]-L-serine + diphosphate. In terms of biological role, catalyzes the ATP- as well as the pyrophosphate-dependent phosphorylation of a specific serine residue in HPr, a phosphocarrier protein of the phosphoenolpyruvate-dependent sugar phosphotransferase system (PTS). HprK/P also catalyzes the pyrophosphate-producing, inorganic phosphate-dependent dephosphorylation (phosphorolysis) of seryl-phosphorylated HPr (P-Ser-HPr). The two antagonistic activities of HprK/P are regulated by several intracellular metabolites, which change their concentration in response to the absence or presence of rapidly metabolisable carbon sources (glucose, fructose, etc.) in the growth medium. Therefore, by controlling the phosphorylation state of HPr, HPrK/P is a sensor enzyme that plays a major role in the regulation of carbon metabolism and sugar transport: it mediates carbon catabolite repression (CCR), and regulates PTS-catalyzed carbohydrate uptake and inducer exclusion. This Thermoanaerobacter pseudethanolicus (strain ATCC 33223 / 39E) (Clostridium thermohydrosulfuricum) protein is HPr kinase/phosphorylase.